Consider the following 291-residue polypeptide: Small ribosomal subunit biogenesis GTPase RsgA (291 aa).

The 159-residue stretch at 63–221 folds into the CP-type G domain; sequence KNELKRPPVS…IADTPGFSAL (159 aa). GTP is bound by residues 112–115 and 164–172; these read TKKD and GQSGVGKST. Zn(2+)-binding residues include Cys-245, Cys-250, His-252, and Cys-258.

Belongs to the TRAFAC class YlqF/YawG GTPase family. RsgA subfamily. In terms of assembly, monomer. Associates with 30S ribosomal subunit, binds 16S rRNA. The cofactor is Zn(2+).

Its subcellular location is the cytoplasm. One of several proteins that assist in the late maturation steps of the functional core of the 30S ribosomal subunit. Helps release RbfA from mature subunits. May play a role in the assembly of ribosomal proteins into the subunit. Circularly permuted GTPase that catalyzes slow GTP hydrolysis, GTPase activity is stimulated by the 30S ribosomal subunit. The sequence is that of Small ribosomal subunit biogenesis GTPase RsgA from Staphylococcus aureus (strain Mu50 / ATCC 700699).